The following is a 603-amino-acid chain: MALRTGGPALVVLLAFWVALGPCHLQGTDPGASADAEGPQCPVACTCSHDDYTDELSVFCSSKNLTHLPDDIPVSTRALWLDGNNLSSIPSAAFQNLSSLDFLNLQGSWLRSLEPQALLGLQNLYYLHLERNRLRNLAVGLFTHTPSLASLSLSSNLLGRLEEGLFQGLSHLWDLNLGWNSLVVLPDTVFQGLGNLHELVLAGNKLTYLQPALFCGLGELRELDLSRNALRSVKANVFVHLPRLQKLYLDRNLITAVAPGAFLGMKALRWLDLSHNRVAGLMEDTFPGLLGLHVLRLAHNAIASLRPRTFKDLHFLEELQLGHNRIRQLGERTFEGLGQLEVLTLNDNQITEVRVGAFSGLFNVAVMNLSGNCLRSLPERVFQGLDKLHSLHLEHSCLGHVRLHTFAGLSGLRRLFLRDNSISSIEEQSLAGLSELLELDLTTNRLTHLPRQLFQGLGHLEYLLLSYNQLTTLSAEVLGPLQRAFWLDISHNHLETLAEGLFSSLGRVRYLSLRNNSLQTFSPQPGLERLWLDANPWDCSCPLKALRDFALQNPGVVPRFVQTVCEGDDCQPVYTYNNITCAGPANVSGLDLRDVSETHFVHC.

The N-terminal stretch at 1–23 is a signal peptide; sequence MALRTGGPALVVLLAFWVALGPC. Residues 32–74 form the LRRNT domain; that stretch reads ASADAEGPQCPVACTCSHDDYTDELSVFCSSKNLTHLPDDIPV. Cystine bridges form between cysteine 41–cysteine 47 and cysteine 45–cysteine 60. 3 N-linked (GlcNAc...) asparagine glycosylation sites follow: asparagine 64, asparagine 85, and asparagine 96. 19 LRR repeats span residues 75-96, 99-120, 123-144, 147-168, 171-192, 195-216, 219-240, 243-264, 267-288, 291-312, 315-336, 339-360, 363-384, 387-408, 411-432, 435-456, 459-480, 483-504, and 507-528; these read STRALWLDGNNLSSIPSAAFQN, SLDFLNLQGSWLRSLEPQALLG, NLYYLHLERNRLRNLAVGLFTH, SLASLSLSSNLLGRLEEGLFQG, HLWDLNLGWNSLVVLPDTVFQG, NLHELVLAGNKLTYLQPALFCG, ELRELDLSRNALRSVKANVFVH, RLQKLYLDRNLITAVAPGAFLG, ALRWLDLSHNRVAGLMEDTFPG, GLHVLRLAHNAIASLRPRTFKD, FLEELQLGHNRIRQLGERTFEG, QLEVLTLNDNQITEVRVGAFSG, NVAVMNLSGNCLRSLPERVFQG, KLHSLHLEHSCLGHVRLHTFAG, GLRRLFLRDNSISSIEEQSLAG, ELLELDLTTNRLTHLPRQLFQG, HLEYLLLSYNQLTTLSAEVLGP, RAFWLDISHNHLETLAEGLFSS, and RVRYLSLRNNSLQTFSPQPGLE. Asparagine 368 carries N-linked (GlcNAc...) asparagine glycosylation. N-linked (GlcNAc...) asparagine glycosylation is present at asparagine 515. The region spanning 535–603 is the LRRCT domain; it reads NPWDCSCPLK…DVSETHFVHC (69 aa). 3 disulfides stabilise this stretch: cysteine 539-cysteine 581, cysteine 541-cysteine 603, and cysteine 565-cysteine 570. Residues asparagine 578 and asparagine 586 are each glycosylated (N-linked (GlcNAc...) asparagine).

In terms of assembly, forms a ternary complex with IGF1 and IGFBP3. As to expression, brain, kidney, lung, heart, spleen, muscle and liver.

The protein localises to the secreted. It is found in the extracellular space. In terms of biological role, may have an important role in regulating the access of circulating IGFs to the tissues. The sequence is that of Insulin-like growth factor-binding protein complex acid labile subunit (Igfals) from Rattus norvegicus (Rat).